A 404-amino-acid chain; its full sequence is High affinity immunoglobulin gamma Fc receptor I (404 aa).

Positions 1-24 (MILTSFGDDMWLLTTLLLWVPVGG) are cleaved as a signal peptide. The Extracellular portion of the chain corresponds to 25–297 (EVVNATKAVI…QVLGPQSSAP (273 aa)). Asn28, Asn48, Asn69, Asn168, and Asn249 each carry an N-linked (GlcNAc...) asparagine glycan. Ig-like C2-type domains lie at 32 to 111 (AVIT…LQIH), 117 to 194 (LQAS…SITV), and 201 to 286 (PVLR…PELE). Disulfide bonds link Cys53-Cys95, Cys134-Cys177, and Cys221-Cys269. A helical transmembrane segment spans residues 298 to 320 (VWFHILFYLSVGIMFSLNTVLYV). The tract at residues 321–342 (KIHRLQREKKYNLEVPLVSEQG) is interaction with EPB41L2. Topologically, residues 321-404 (KIHRLQREKK…DSTGAQTSQS (84 aa)) are cytoplasmic. Residues 346-404 (NSFQQVRSDGVYEEVTATASQTTPKEAPDGPRSSVGDCGPEQPEPLPPSDSTGAQTSQS) form a disordered region. Ser347 is modified (phosphoserine). Thr368 bears the Phosphothreonine mark. Residues 394 to 404 (SDSTGAQTSQS) are compositionally biased toward polar residues.

Belongs to the immunoglobulin superfamily. FCGR1 family. Interacts with FCERG1; forms a functional signaling complex. Interacts with FLNA; prevents FCGR1A degradation. Interacts with EPB41L2, LAT and PPL. Interacts with HCK and LYN. Post-translationally, N-glycosylated. Phosphorylated on serine residues. In terms of tissue distribution, macrophage-specific.

It localises to the cell membrane. High affinity receptor for the Fc region of immunoglobulins gamma. Functions in both innate and adaptive immune responses. The chain is High affinity immunoglobulin gamma Fc receptor I (Fcgr1) from Mus musculus (Mouse).